Consider the following 252-residue polypeptide: Aspartate/glutamate leucyltransferase (252 aa).

Belongs to the R-transferase family. Bpt subfamily.

The protein resides in the cytoplasm. It catalyses the reaction N-terminal L-glutamyl-[protein] + L-leucyl-tRNA(Leu) = N-terminal L-leucyl-L-glutamyl-[protein] + tRNA(Leu) + H(+). The enzyme catalyses N-terminal L-aspartyl-[protein] + L-leucyl-tRNA(Leu) = N-terminal L-leucyl-L-aspartyl-[protein] + tRNA(Leu) + H(+). Functionally, functions in the N-end rule pathway of protein degradation where it conjugates Leu from its aminoacyl-tRNA to the N-termini of proteins containing an N-terminal aspartate or glutamate. This is Aspartate/glutamate leucyltransferase from Polynucleobacter necessarius subsp. necessarius (strain STIR1).